Consider the following 242-residue polypeptide: Small ribosomal subunit protein uS2 (242 aa).

The protein belongs to the universal ribosomal protein uS2 family.

This Mannheimia succiniciproducens (strain KCTC 0769BP / MBEL55E) protein is Small ribosomal subunit protein uS2.